A 495-amino-acid chain; its full sequence is Vacuolar-processing enzyme (495 aa).

The N-terminal stretch at 1–32 (MALDRSIISKTTWYSVVLWMMVVLVRVHGAAA) is a signal peptide. Asparagine 138 is a glycosylation site (N-linked (GlcNAc...) asparagine). Histidine 178 is an active-site residue. Cysteine 220 serves as the catalytic Nucleophile. Cysteine 253 and cysteine 267 are disulfide-bonded. Residues asparagine 320 and asparagine 376 are each glycosylated (N-linked (GlcNAc...) asparagine). Intrachain disulfides connect cysteine 431-cysteine 461 and cysteine 443-cysteine 478.

This sequence belongs to the peptidase C13 family.

Asparagine-specific endopeptidase involved in the processing of vacuolar seed protein precursors into the mature forms. The polypeptide is Vacuolar-processing enzyme (Glycine max (Soybean)).